The chain runs to 134 residues: MNTEPTWMAEVVFDENGLIPAIAQDAETGQILMVAWMSREALAETAATGRAVYWSRSRQRLWRKGEESGHAQDVHELRLDCDGDVILLKVHQNGGIACHTGRASCFYRRLEGTASQAEWITIDPVLKDPELIYK.

Asp80 contributes to the Mg(2+) binding site. Cys81 is a binding site for Zn(2+). Residues Asp82 and Asp84 each coordinate Mg(2+). Residues Cys98 and Cys105 each contribute to the Zn(2+) site.

Belongs to the PRA-CH family. Homodimer. The cofactor is Mg(2+). Zn(2+) serves as cofactor.

It is found in the cytoplasm. The enzyme catalyses 1-(5-phospho-beta-D-ribosyl)-5'-AMP + H2O = 1-(5-phospho-beta-D-ribosyl)-5-[(5-phospho-beta-D-ribosylamino)methylideneamino]imidazole-4-carboxamide. The protein operates within amino-acid biosynthesis; L-histidine biosynthesis; L-histidine from 5-phospho-alpha-D-ribose 1-diphosphate: step 3/9. Its function is as follows. Catalyzes the hydrolysis of the adenine ring of phosphoribosyl-AMP. The protein is Phosphoribosyl-AMP cyclohydrolase of Bordetella pertussis (strain Tohama I / ATCC BAA-589 / NCTC 13251).